The following is a 124-amino-acid chain: Riboflavin kinase (124 aa).

Residue 10-15 (GLGKAA) participates in CDP binding. Mg(2+) is bound by residues T39 and N41. FMN-binding residues include T93 and E101. Residue 106–109 (DKLR) participates in CDP binding.

The protein belongs to the archaeal riboflavin kinase family. Mg(2+) serves as cofactor.

The enzyme catalyses riboflavin + CTP = CDP + FMN + H(+). The protein operates within cofactor biosynthesis; FMN biosynthesis; FMN from riboflavin (CTP route): step 1/1. Catalyzes the CTP-dependent phosphorylation of riboflavin (vitamin B2) to form flavin mononucleotide (FMN). This Methanobrevibacter smithii (strain ATCC 35061 / DSM 861 / OCM 144 / PS) protein is Riboflavin kinase.